A 340-amino-acid polypeptide reads, in one-letter code: Glycerol-3-phosphate dehydrogenase [NAD(P)+] (340 aa).

NADPH-binding residues include Ser-11, Trp-12, Arg-33, and Lys-106. The sn-glycerol 3-phosphate site is built by Lys-106, Gly-137, and Ser-139. Position 141 (Ala-141) interacts with NADPH. Residues Lys-192, Asp-245, Ser-255, Arg-256, and Asn-257 each coordinate sn-glycerol 3-phosphate. Residue Lys-192 is the Proton acceptor of the active site. Arg-256 lines the NADPH pocket. NADPH contacts are provided by Val-280 and Glu-282.

This sequence belongs to the NAD-dependent glycerol-3-phosphate dehydrogenase family.

The protein resides in the cytoplasm. The catalysed reaction is sn-glycerol 3-phosphate + NAD(+) = dihydroxyacetone phosphate + NADH + H(+). It catalyses the reaction sn-glycerol 3-phosphate + NADP(+) = dihydroxyacetone phosphate + NADPH + H(+). It participates in membrane lipid metabolism; glycerophospholipid metabolism. Its function is as follows. Catalyzes the reduction of the glycolytic intermediate dihydroxyacetone phosphate (DHAP) to sn-glycerol 3-phosphate (G3P), the key precursor for phospholipid synthesis. The sequence is that of Glycerol-3-phosphate dehydrogenase [NAD(P)+] from Bacillus cereus (strain ATCC 10987 / NRS 248).